Here is a 976-residue protein sequence, read N- to C-terminus: Vacuolar membrane protease (976 aa).

Topologically, residues 1-15 are cytoplasmic; it reads MKLKSVFRSVLKYRK. Residues 16 to 36 traverse the membrane as a helical segment; the sequence is TNLSLLLLITYSIITLLYIFD. At 37–359 the chain is on the vacuolar side; sequence HERYKLNLPK…KFFVISAKTL (323 aa). Residues N96 and N121 are each glycosylated (N-linked (GlcNAc...) asparagine). Zn(2+) contacts are provided by H156 and D168. N189 is a glycosylation site (N-linked (GlcNAc...) asparagine). Residue E200 is the Proton acceptor of the active site. E201 lines the Zn(2+) pocket. N212 and N217 each carry an N-linked (GlcNAc...) asparagine glycan. E226 and H300 together coordinate Zn(2+). Residues 360 to 380 form a helical membrane-spanning segment; that stretch reads FYWNCIFLLVSPVVAIGLYLI. Residues 381–392 lie on the Cytoplasmic side of the membrane; the sequence is SRDRMTWKSHSW. The helical transmembrane segment at 393–412 threads the bilayer; the sequence is LSWTRFPLSLAAGIIVQKLF. The Vacuolar portion of the chain corresponds to 413–428; that stretch reads SNDIIRSNPLTFSRNY. Residues 429 to 449 form a helical membrane-spanning segment; that stretch reads FWPISAFFTQVIFTSYVLINC. The Cytoplasmic portion of the chain corresponds to 450 to 461; it reads SNFFFPCADMKS. The chain crosses the membrane as a helical span at residues 462–482; that stretch reads LSIIELFIILWTILLFTSKLL. Over 483-496 the chain is Vacuolar; it reads YSSDYRYTGLYPLS. The helical transmembrane segment at 497 to 517 threads the bilayer; the sequence is IFFLLSTIAAILRLLALALGM. At 518-627 the chain is on the cytoplasmic side; that stretch reads RTRKRLGREC…NSLKLEYTDY (110 aa). A disordered region spans residues 528-610; sequence RDHHSNYSSH…PLLKGSNSME (83 aa). Residues 549–558 show a composition bias toward polar residues; it reads NLEQPQDQFT. Residues 559-570 show a composition bias toward low complexity; sequence SSQDDQASIQDD. The span at 582-601 shows a compositional bias: basic and acidic residues; sequence NVDEDHGMDSSSQQHDERVP. Residues 628–648 form a helical membrane-spanning segment; sequence AWIIQFLLIVPIPSFILFNSV. Over 649–668 the chain is Vacuolar; it reads DVIMDALNHTVQEGSKATFD. An N-linked (GlcNAc...) asparagine glycan is attached at N656. Residues 669 to 689 form a helical membrane-spanning segment; sequence VLRFGMVGSILMALPILPFFY. The Cytoplasmic portion of the chain corresponds to 690–692; the sequence is KVN. Residues 693 to 713 traverse the membrane as a helical segment; sequence YITISLTALLFLISASKTLLV. At 714 to 976 the chain is on the vacuolar side; the sequence is HPFTNSNPLK…LVIVKDAIIL (263 aa). N768, N796, N811, N866, and N937 each carry an N-linked (GlcNAc...) asparagine glycan.

It belongs to the peptidase M28 family. Zn(2+) serves as cofactor.

It is found in the vacuole membrane. In terms of biological role, may be involved in vacuolar sorting and osmoregulation. This is Vacuolar membrane protease from Saccharomyces cerevisiae (strain YJM789) (Baker's yeast).